The following is a 200-amino-acid chain: Peptidyl-tRNA hydrolase (200 aa).

Tyrosine 15 is a binding site for tRNA. Histidine 20 acts as the Proton acceptor in catalysis. 3 residues coordinate tRNA: tyrosine 66, asparagine 68, and asparagine 114.

It belongs to the PTH family. In terms of assembly, monomer.

It localises to the cytoplasm. The enzyme catalyses an N-acyl-L-alpha-aminoacyl-tRNA + H2O = an N-acyl-L-amino acid + a tRNA + H(+). Its function is as follows. Hydrolyzes ribosome-free peptidyl-tRNAs (with 1 or more amino acids incorporated), which drop off the ribosome during protein synthesis, or as a result of ribosome stalling. Functionally, catalyzes the release of premature peptidyl moieties from peptidyl-tRNA molecules trapped in stalled 50S ribosomal subunits, and thus maintains levels of free tRNAs and 50S ribosomes. The chain is Peptidyl-tRNA hydrolase from Paraburkholderia phytofirmans (strain DSM 17436 / LMG 22146 / PsJN) (Burkholderia phytofirmans).